A 957-amino-acid chain; its full sequence is ADAMTS-like protein 2 (957 aa).

A signal peptide spans 1-29; it reads MDGRRQHPHWAWSLLAVAVVAGGAAPTEA. Residues 47–106 form the TSP type-1 1 domain; the sequence is AYWWGEWTKWTACSRSCGGGVTSQERHCLQQRRKSVPGTGNRTCVGTSKRYQLCRVQECP. 3 disulfides stabilise this stretch: Cys59-Cys100, Cys63-Cys105, and Cys74-Cys90. Asn87, Asn374, Asn435, Asn482, Asn518, Asn530, Asn539, and Asn550 each carry an N-linked (GlcNAc...) asparagine glycan. Positions 532-544 are enriched in polar residues; it reads SSEAPFPNTSASP. The segment at 532 to 568 is disordered; it reads SSEAPFPNTSASPPNLAGNRTHKARTRPKARKQGVSP. Basic residues predominate over residues 551–563; the sequence is RTHKARTRPKARK. 6 consecutive TSP type-1 domains span residues 570 to 624, 628 to 692, 694 to 742, 743 to 801, 803 to 857, and 859 to 914; these read DMYR…EFCA, CQPR…PACG, QWEM…TGPP, CDRQ…KNCP, HWLA…TCFE, and PCFK…QPCP. Asn737 carries N-linked (GlcNAc...) asparagine glycosylation. Asn813 is a glycosylation site (N-linked (GlcNAc...) asparagine). The PLAC domain maps to 918–956; sequence PDDSCQDQPGTNCALAIKVNLCGHWYYSKACCRSCRPPH.

In terms of assembly, interacts with LTBP1. Glycosylated. Can be O-fucosylated by POFUT2 on a serine or a threonine residue found within the consensus sequence C1-X(2)-(S/T)-C2-G of the TSP type-1 repeat domains where C1 and C2 are the first and second cysteine residue of the repeat, respectively. Fucosylated repeats can then be further glycosylated by the addition of a beta-1,3-glucose residue by the glucosyltransferase, B3GALTL. Fucosylation mediates the efficient secretion of ADAMTS family members. Can also be C-glycosylated with one or two mannose molecules on tryptophan residues within the consensus sequence W-X-X-W of the TPRs, and N-glycosylated. These other glycosylations can also facilitate secretion.

The protein localises to the secreted. The sequence is that of ADAMTS-like protein 2 (Adamtsl2) from Mus musculus (Mouse).